The sequence spans 777 residues: MDSKESLTPGKEENPSSVLTQERGNVMDFCKILRGGATLKVSVSSTSLAAASQSDSKQQRLLVDFPKGSVSNAQQPDLSKAVSLSMGLYMGETETKVMGNDLGFPQQGQISLSSGETDLQLLEESIANLNRSTSVPENPKSSASSSVSAAPKEKEFPKTHSDVSSEQQNLKGQTGSNGGNVKLYTADQSTFDILQDLEFSSGSPGKETNQSPWKSDLLIDENCLLSPLAGEEDSFLLEGNSNEDCKPLILPDTKPKIKDNGDLVLSSSSNVTLPQVKTEKEDFIELCTPGVIKQEKLSTVYCQASFPGANIIGNKMSAISIHGVSTSGGQMYHYDMNTASLSQQQDQKPIFNVIPPIPVGSENWNRCQGSGDDNLTSLGTLNFPGRTVFSNGYSSPSMRPDVSSPPSSSSTATTGPPPKLCLVCSDEASGCHYGVLTCGSCKVFFKRAVEGQHNYLCAGRNDCIIDKIRRKNCPACRYRKCLQAGMNLEARKTKKKIKGIQQATTGVSQETSENPANKTIVPATLPQLTPTLVSLLEVIEPEVLYAGYDSTVPDSTWRIMTTLNMLGGRQVIAAVKWAKAIPGFRNLHLDDQMTLLQYSWMFLMAFALGWRSYRQASSNLLCFAPDLIINEQRMTLPCMYDQCKHMLYVSSELHRLQVSYEEYLCMKTLLLLSSVPKDGLKSQELFDEIRMTYIKELGKAIVKREGNSSQNWQRFYQLTKLLDSMHEVVENLLNYCFQTFLDKTMSIEFPEMLAEIITNQLPKYSNGNIKKLLFHQK.

Basic and acidic residues predominate over residues 1–14; it reads MDSKESLTPGKEEN. Residues 1-22 are disordered; that stretch reads MDSKESLTPGKEENPSSVLTQE. A modulating region spans residues 1–420; that stretch reads MDSKESLTPG…TATTGPPPKL (420 aa). Position 8 is a phosphothreonine (T8). Residue R23 is modified to Omega-N-methylarginine. Phosphoserine occurs at positions 45, 113, 134, and 141. Residues 130-182 form a disordered region; the sequence is NRSTSVPENPKSSASSSVSAAPKEKEFPKTHSDVSSEQQNLKGQTGSNGGNVK. The segment covering 134–150 has biased composition (low complexity); that stretch reads SVPENPKSSASSSVSAA. Residues 151–163 are compositionally biased toward basic and acidic residues; it reads PKEKEFPKTHSDV. Over residues 164–174 the composition is skewed to polar residues; that stretch reads SSEQQNLKGQT. Phosphoserine is present on residues S203, S211, and S226. K258 participates in a covalent cross-link: Glycyl lysine isopeptide (Lys-Gly) (interchain with G-Cter in SUMO2). A Phosphoserine modification is found at S267. Glycyl lysine isopeptide (Lys-Gly) (interchain with G-Cter in SUMO); alternate cross-links involve residues K277 and K293. Glycyl lysine isopeptide (Lys-Gly) (interchain with G-Cter in SUMO2); alternate cross-links involve residues K277 and K293. Residues 394-414 show a composition bias toward low complexity; sequence SSPSMRPDVSSPPSSSSTATT. Residues 394–415 are disordered; that stretch reads SSPSMRPDVSSPPSSSSTATTG. S404 carries the phosphoserine modification. Residue K419 forms a Glycyl lysine isopeptide (Lys-Gly) (interchain with G-Cter in ubiquitin) linkage. 2 NR C4-type zinc fingers span residues 421–441 and 457–481; these read CLVC…CGSC and CAGR…YRKC. Residues 421–486 constitute a DNA-binding region (nuclear receptor); it reads CLVCSDEASG…RYRKCLQAGM (66 aa). 4 positions are modified to N6-acetyllysine: K480, K492, K494, and K495. Positions 485–777 are interaction with CLOCK; the sequence is GMNLEARKTK…NIKKLLFHQK (293 aa). Residues 487–523 form a hinge region; it reads NLEARKTKKKIKGIQQATTGVSQETSENPANKTIVPA. Residues 524–758 enclose the NR LBD domain; sequence TLPQLTPTLV…FPEMLAEIIT (235 aa). The interaction with CRY1 stretch occupies residues 532–697; that stretch reads LVSLLEVIEP…EIRMTYIKEL (166 aa). Residue K703 forms a Glycyl lysine isopeptide (Lys-Gly) (interchain with G-Cter in SUMO) linkage.

The protein belongs to the nuclear hormone receptor family. NR3 subfamily. As to quaternary structure, heteromultimeric cytoplasmic complex with HSP90AA1, HSPA1A/HSPA1B, and FKBP5 or another immunophilin such as PPID, STIP1, or the immunophilin homolog PPP5C. Upon ligand binding FKBP5 dissociates from the complex and FKBP4 takes its place, thereby linking the complex to dynein and mediating transport to the nucleus, where the complex dissociates. Probably forms a complex composed of chaperones HSP90 and HSP70, co-chaperones CDC37, PPP5C, TSC1 and client protein TSC2, CDK4, AKT, RAF1 and NR3C1; this complex does not contain co-chaperones STIP1/HOP and PTGES3/p23. Directly interacts with UNC45A. Binds to DNA as a homodimer, and as heterodimer with NR3C2 or the retinoid X receptor. Binds STAT5A and STAT5B homodimers and heterodimers. Interacts with NRIP1, POU2F1, POU2F2 and TRIM28. Interacts with several coactivator complexes, including the SMARCA4 complex, CREBBP/EP300, TADA2L (Ada complex) and p160 coactivators such as NCOA2 and NCOA6. Interaction with BAG1 inhibits transactivation. Interacts with HEXIM1 and TGFB1I1. Interacts with NCOA1. Interacts with NCOA3, SMARCA4, SMARCC1, SMARCD1, and SMARCE1. Interacts with CLOCK, CRY1 and CRY2 in a ligand-dependent fashion. Interacts with CIART. Interacts with RWDD3. Interacts with UBE2I/UBC9 and this interaction is enhanced in the presence of RWDD3. Interacts with GRIP1. Interacts with NR4A3 (via nuclear receptor DNA-binding domain), represses transcription activity of NR4A3 on the POMC promoter Nur response element (NurRE). Directly interacts with PNRC2 to attract and form a complex with UPF1 and DCP1A; the interaction leads to rapid mRNA degradation. Interacts with GSK3B. Interacts with FNIP1 and FNIP2. Interacts (via C-terminus) with HNRNPU (via C-terminus). Interacts with MCM3AP. Interacts (via domain NR LBD) with HSP90AA1 and HSP90AB1. In the absence of hormonal ligand, interacts with TACC1. Interacts (via NR LBD domain) with ZNF764 (via KRAB domain); the interaction regulates transcription factor activity of NR3C1 by directing its actions toward certain biologic pathways. In terms of processing, acetylation by CLOCK reduces its binding to glucocorticoid response elements and its transcriptional activity. Increased proteasome-mediated degradation in response to glucocorticoids. Post-translationally, phosphorylated in the absence of hormone; becomes hyperphosphorylated in the presence of glucocorticoid. The Ser-203, Ser-226 and Ser-404-phosphorylated forms are mainly cytoplasmic, and the Ser-211-phosphorylated form is nuclear. Phosphorylation at Ser-211 increases transcriptional activity. Phosphorylation at Ser-203, Ser-226 and Ser-404 decreases signaling capacity. Phosphorylation at Ser-404 may protect from glucocorticoid-induced apoptosis. Phosphorylation at Ser-203 and Ser-211 is not required in regulation of chromosome segregation. May be dephosphorylated by PPP5C, attenuates NR3C1 action. In terms of processing, ubiquitinated by UBR5, leading to its degradation: UBR5 specifically recognizes and binds ligand-bound NR3C1 when it is not associated with coactivators (NCOAs). In presence of NCOAs, the UBR5-degron is not accessible, preventing its ubiquitination and degradation. Sumoylation at Lys-277 and Lys-293 negatively regulates its transcriptional activity. Sumoylation at Lys-703 positively regulates its transcriptional activity in the presence of RWDD3. Sumoylation at Lys-277 and Lys-293 is dispensable whereas sumoylation at Lys-703 is critical for the stimulatory effect of RWDD3 on its transcriptional activity. Heat shock increases sumoylation in a RWDD3-dependent manner.

Its subcellular location is the cytoplasm. The protein resides in the nucleus. It is found in the mitochondrion. It localises to the cytoskeleton. The protein localises to the spindle. Its subcellular location is the microtubule organizing center. The protein resides in the centrosome. It is found in the chromosome. It localises to the nucleoplasm. Functionally, receptor for glucocorticoids (GC). Has a dual mode of action: as a transcription factor that binds to glucocorticoid response elements (GRE), both for nuclear and mitochondrial DNA, and as a modulator of other transcription factors. Affects inflammatory responses, cellular proliferation and differentiation in target tissues. Involved in chromatin remodeling. Plays a role in rapid mRNA degradation by binding to the 5' UTR of target mRNAs and interacting with PNRC2 in a ligand-dependent manner which recruits the RNA helicase UPF1 and the mRNA-decapping enzyme DCP1A, leading to RNA decay. Could act as a coactivator for STAT5-dependent transcription upon growth hormone (GH) stimulation and could reveal an essential role of hepatic GR in the control of body growth. Mediates glucocorticoid-induced apoptosis. Promotes accurate chromosome segregation during mitosis. May act as a tumor suppressor. May play a negative role in adipogenesis through the regulation of lipolytic and antilipogenic gene expression. The chain is Glucocorticoid receptor (NR3C1) from Saimiri boliviensis boliviensis (Bolivian squirrel monkey).